The following is a 166-amino-acid chain: Transcription antitermination protein NusB (166 aa).

Over residues Met-1 to Asp-18 the composition is skewed to basic and acidic residues. A disordered region spans residues Met-1–Glu-30.

Belongs to the NusB family.

Functionally, involved in transcription antitermination. Required for transcription of ribosomal RNA (rRNA) genes. Binds specifically to the boxA antiterminator sequence of the ribosomal RNA (rrn) operons. The chain is Transcription antitermination protein NusB from Pseudomonas entomophila (strain L48).